A 510-amino-acid chain; its full sequence is Adenosine deaminase 2 (510 aa).

A signal peptide spans 1 to 24 (MSGWPVLPALLLAVAMSSFHSATS). Positions 25 to 95 (RDEERNRLLM…GLMEKSAVFN (71 aa)) are dimerization. Positions 107 and 109 each coordinate Zn(2+). Position 110 (Asp110) interacts with substrate. Asn122 is a glycosylation site (N-linked (GlcNAc...) asparagine). A PRB domain region spans residues 122–182 (NATYRPYCYF…TEFDNSLLRT (61 aa)). Cys132 and Cys156 form a disulfide bridge. A glycan (N-linked (GlcNAc...) asparagine) is linked at Asn171. Residues 201–208 (WKKFKTIF), His290, and Gly323 contribute to the substrate site. His353 contributes to the Zn(2+) binding site. Residue Glu356 is the Proton donor of the active site. Residue Asn375 is glycosylated (N-linked (GlcNAc...) asparagine). His381 serves as the catalytic Proton acceptor. Residue Asp438 participates in Zn(2+) binding. Asp439 contacts substrate.

The protein belongs to the metallo-dependent hydrolases superfamily. Adenosine and AMP deaminases family. ADGF subfamily. Homodimer. Interacts with adenosine receptors. Binds heparin. It depends on Zn(2+) as a cofactor.

The protein localises to the secreted. The enzyme catalyses adenosine + H2O + H(+) = inosine + NH4(+). Functionally, adenosine deaminase that may contribute to the degradation of extracellular adenosine, a signaling molecule that controls a variety of cellular responses. Requires elevated adenosine levels for optimal enzyme activity. Binds to cell surfaces via proteoglycans and may play a role in the regulation of cell proliferation and differentiation, independently of its enzyme activity. The sequence is that of Adenosine deaminase 2 from Sus scrofa (Pig).